The primary structure comprises 918 residues: MEEKRVKCKKKLTSTIGTWKYIQACIFFAIILISNFYGLKSFTDGFLLRRAVLNQTSLCENPPADVREWKNSSGCWAPKIFERAVIVIIDALRYDFLIPYNDSNYYHNAFTTPYETSVLHPENSYLTQFIADAPTTTSQRLKGLTTGSLPTFIDLGSNFAGTNIDEDNLLLQWKSLDKQIVLLGDDTWDVLFHDYLNETLSQPAFSFNVPDLHGVDNKVNQYVFDYIKDANFDVLIAHYLGVDHVGHRLGPDHPTMRDKLNQMDRCVKEMMDLLDDSTLLIVMGDHGMDNKGNHGGDSFDEINSVLWMYSKKPTFGYLKQPGKVLSANQVDLVPTLSLLLGNPIPYGNLGTLIPEPFYYYGDEYLSKAQKINIGQLNRFFSEYDLDASDFLSSSVHKNNNSYLDQYFLDFDYARDAFSYFKAIWAEFSLFPMIIGFLLLIIGGFNLALLMQDKSVIFRMSANMAPSVMKCLPVCLILILANNELHSPFPAEFYVLLPSFYILLNSFNQKLMEYFKGFVKLDYFSIFITFLHVCSFGSNSFTVWEDRLCHFLIITIGLVMFCKCFSEMSPLFACSTYSALAFILLQVISSYVTNCREEQGAFCVSTYISTPDNSLRTLIVLALMALSSIILPLILQLHLRRVLGLSLKLYHLSILYFFELISSIFWIAHHVFANDALLEKQYHHVLYSLANTYVICILGVLIWQFFLLSRSKFAKINVIERSYFVFALLYSFLSFLQRPLGHLSLFSCFLQILLLIQLKQWQPSVGHNFFSVTLGLLGLSHFFTTGNQAAISSLDWNFAFIHSKSAENQAISAIFMFLHTVGAPILTCISIPLFSFEPLSKKNRFLINLFRFSFSFILYNLLISTSTVFFAGFFRRHLMVWKVFAPRFMLSGILLVTHQLFVLIQCFGSSVVKFPEDAE.

A helical transmembrane segment spans residues 16-36 (IGTWKYIQACIFFAIILISNF). N-linked (GlcNAc...) asparagine glycosylation is found at N54, N71, N101, N197, and N399. Transmembrane regions (helical) follow at residues 429–449 (LFPM…LALL), 459–479 (MSAN…ILIL), 486–506 (SPFP…LNSF), 523–543 (FSIF…FTVW), 547–563 (LCHF…FCKC), 567–587 (MSPL…LQVI), 616–636 (TLIV…ILQL), 651–671 (LSIL…HHVF), 687–707 (SLAN…FFLL), 715–735 (INVI…LSFL), 738–758 (PLGH…IQLK), 762–782 (PSVG…SHFF), 813–833 (IFMF…IPLF), 853–873 (FSFI…AGFF), and 887–907 (FMLS…QCFG).

It belongs to the PIGG/PIGN/PIGO family. PIGO subfamily. In terms of processing, glycosylated.

Its subcellular location is the endoplasmic reticulum membrane. It functions in the pathway glycolipid biosynthesis; glycosylphosphatidylinositol-anchor biosynthesis. Involved in glycosylphosphatidylinositol-anchor biosynthesis. Transfers ethanolamine phosphate to the GPI third mannose which links the GPI-anchor to the C-terminus of the proteins by an amide bond. Involved in cell wall biosynthesis. This Schizosaccharomyces pombe (strain 972 / ATCC 24843) (Fission yeast) protein is GPI ethanolamine phosphate transferase 3 (gpi13).